The chain runs to 399 residues: Tryptophan synthase beta chain (399 aa).

Lys-92 carries the N6-(pyridoxal phosphate)lysine modification.

This sequence belongs to the TrpB family. As to quaternary structure, tetramer of two alpha and two beta chains. Requires pyridoxal 5'-phosphate as cofactor.

It carries out the reaction (1S,2R)-1-C-(indol-3-yl)glycerol 3-phosphate + L-serine = D-glyceraldehyde 3-phosphate + L-tryptophan + H2O. It functions in the pathway amino-acid biosynthesis; L-tryptophan biosynthesis; L-tryptophan from chorismate: step 5/5. Functionally, the beta subunit is responsible for the synthesis of L-tryptophan from indole and L-serine. The polypeptide is Tryptophan synthase beta chain (Legionella pneumophila (strain Paris)).